The chain runs to 714 residues: Protein ESC8 (714 aa).

Disordered regions lie at residues 598–674 (APTG…ELHN) and 694–714 (RQLQ…RKGL). Polar residues predominate over residues 610 to 624 (TSSQRRTTVHYSSDV). Acidic residues predominate over residues 628 to 650 (VSEESENEVDIDVSDDYDSEYLS). Residues 654–674 (TLTRKGEDRTDKSFGKRELHN) show a composition bias toward basic and acidic residues. Positions 704 to 714 (RSLRRNARKGL) are enriched in basic residues.

As to quaternary structure, interacts with GAL11 and SIR2.

It localises to the cytoplasm. The protein localises to the nucleus. Involved in HMR and telomere silencing via the recruitment or stabilizing of the SIR (silent information regulators) complex. The polypeptide is Protein ESC8 (ESC8) (Saccharomyces cerevisiae (strain ATCC 204508 / S288c) (Baker's yeast)).